The chain runs to 147 residues: Large ribosomal subunit protein uL13 (147 aa).

It belongs to the universal ribosomal protein uL13 family. As to quaternary structure, part of the 50S ribosomal subunit.

Functionally, this protein is one of the early assembly proteins of the 50S ribosomal subunit, although it is not seen to bind rRNA by itself. It is important during the early stages of 50S assembly. The chain is Large ribosomal subunit protein uL13 from Lactobacillus delbrueckii subsp. bulgaricus (strain ATCC 11842 / DSM 20081 / BCRC 10696 / JCM 1002 / NBRC 13953 / NCIMB 11778 / NCTC 12712 / WDCM 00102 / Lb 14).